Reading from the N-terminus, the 693-residue chain is Sulfite reductase 1 [ferredoxin], chloroplastic (693 aa).

The transit peptide at 1-62 (MTTSFGAAIN…PSSIVRAVST (62 aa)) directs the protein to the chloroplast. [4Fe-4S] cluster contacts are provided by Cys502, Cys508, Cys548, and Cys552. A siroheme-binding site is contributed by Cys552.

The protein belongs to the nitrite and sulfite reductase 4Fe-4S domain family. In terms of assembly, monomer. Interacts with ferredoxin. It depends on siroheme as a cofactor. The cofactor is [4Fe-4S] cluster. Phosphorylated; this phosphorylation reduces DNA-binding. In terms of tissue distribution, expressed in leaves, stems, roots and petals.

It is found in the plastid. The protein localises to the chloroplast stroma. The protein resides in the chloroplast nucleoid. It localises to the plastid stroma. It carries out the reaction hydrogen sulfide + 6 oxidized [2Fe-2S]-[ferredoxin] + 3 H2O = sulfite + 6 reduced [2Fe-2S]-[ferredoxin] + 7 H(+). Its function is as follows. Essential protein with sulfite reductase activity required in assimilatory sulfate reduction pathway during both primary and secondary metabolism and thus involved in development and growth. Functionally, DNA-binding protein that binds to both double-stranded and single-stranded DNA without significant sequence specificity to reversibly repress the transcriptional activity of chloroplast nucleoids by promoting DNA compaction and possibly regulate DNA replication. The protein is Sulfite reductase 1 [ferredoxin], chloroplastic (SIR1) of Nicotiana tabacum (Common tobacco).